The chain runs to 175 residues: Alpha-crystallin B chain (175 aa).

N-acetylmethionine is present on Met1. Ser19 is subject to Phosphoserine. An O-linked (GlcNAc) serine glycan is attached at Ser41. Residues Ser45 and Ser59 each carry the phosphoserine modification. The region spanning 56-164 is the sHSP domain; it reads RAPSWIDTGL…PERTIPITRE (109 aa). His83 contributes to the Zn(2+) binding site. N6-acetyllysine is present on Lys92. The Zn(2+) site is built by His104, Glu106, His111, and His119. The segment at 142–175 is disordered; the sequence is VLTVNGPRKQAPGPERTIPITREEKPAVTAAPKK. Lys166 carries the post-translational modification N6-acetyllysine. O-linked (GlcNAc) threonine glycosylation is present at Thr170.

It belongs to the small heat shock protein (HSP20) family. In terms of assembly, heteromer composed of three CRYAA and one CRYAB subunits. Aggregates with homologous proteins, including the small heat shock protein HSPB1, to form large heteromeric complexes. Inter-subunit bridging via zinc ions enhances stability, which is crucial as there is no protein turn over in the lens. Interacts with HSPBAP1 and TTN/titin. Interacts with TMEM109; in the cellular response to DNA damage. Interacts with DES; binds rapidly during early stages of DES filament assembly and a reduced binding seen in the later stages. Interacts with TMED10; the interaction mediates the translocation from the cytoplasm into the ERGIC (endoplasmic reticulum-Golgi intermediate compartment) and thereby secretion. Interacts with ATP6V1A and with MTOR, forming a ternary complex. As to expression, lens as well as other tissues.

The protein resides in the cytoplasm. Its subcellular location is the nucleus. The protein localises to the secreted. It is found in the lysosome. Its function is as follows. May contribute to the transparency and refractive index of the lens. Has chaperone-like activity, preventing aggregation of various proteins under a wide range of stress conditions. In lens epithelial cells, stabilizes the ATP6V1A protein, preventing its degradation by the proteasome. The polypeptide is Alpha-crystallin B chain (CRYAB) (Oryctolagus cuniculus (Rabbit)).